The sequence spans 860 residues: MFMSTDEVRRAFLSFFESKGHQIVESSSLVPANDPTLLFTNAGMNQFKDCFLGLEKRAYTRATTAQRCVRAGGKHNDLENVGFTARHHTFFEMLGNFSFGDYFKEDAIQYAWEFLTDVLQLPKERLLVTVYETDDEAFDIWNKKVGIPADRIIRIGDKKGGKKFDSDNFWQMGDTGPCGPCTEIFYDHGDHIWGGPPGSPEEDGDRFIEIWNNVFMQFNRHADGTMEPLPKPSVDTGMGIERISAIMQGVHSNYEIDVFQTLIKAAADAIGYQDLTNQSLRVVADHIRSCAFLIVDGVMPSNEGRGYVLRRIIRRAVRHGNKLGAQGAFFHKLVGPLAEVMGTAGVELKKQQALVEKVLRIEEENFGRTLDRGMSILNDALDQLSGQVLDGETVFKLYDTYGFPADLTNDVARERGFSIDEAGFEQAMEEQRQRAREAGQFGTDYNSLIKSATNTEFCGYTASRGQSVVREMFVEGAEVSTLSAGDKAIIVLDNTPFYAESGGQCGDTGVLKTDAGIFHVEDTQKLGNAIAHHGVIAQGVLATGDQVDAIVDEKRRAAISLNHSATHLLHAALRKVLGEHVAQKGSLVRAETLRFDFSHLEAMTAAEIKEVERLVNQEVRRNHSIETNIMNIDEAKAKGAMALFGEKYDDQVRVLSMGDFSTELCGGIHASNTGDIGLFKIISEGGIAAGIRRIEAVTGEGALDYLDAQQAQHDAKVSEMAAKAKLLEKEIQQLKDKLAAKESAGLINQVKQIAGVNVLVAQLNGADNKALRGMVDDLKNQLSSGIIMLGNVAEGKVGLIAGVTNDLTNKVKAGELVNMVALQVGGKGGGRPDMAQAGGTDAHALPSALESVDAWIAERL.

Residues His563, His567, Cys665, and His669 each coordinate Zn(2+).

Belongs to the class-II aminoacyl-tRNA synthetase family. Requires Zn(2+) as cofactor.

The protein resides in the cytoplasm. It catalyses the reaction tRNA(Ala) + L-alanine + ATP = L-alanyl-tRNA(Ala) + AMP + diphosphate. Catalyzes the attachment of alanine to tRNA(Ala) in a two-step reaction: alanine is first activated by ATP to form Ala-AMP and then transferred to the acceptor end of tRNA(Ala). Also edits incorrectly charged Ser-tRNA(Ala) and Gly-tRNA(Ala) via its editing domain. The polypeptide is Alanine--tRNA ligase (Vibrio cholerae serotype O1 (strain ATCC 39315 / El Tor Inaba N16961)).